Reading from the N-terminus, the 344-residue chain is Protein RecA (344 aa).

Position 65-72 (65-72) interacts with ATP; that stretch reads GPESSGKT.

This sequence belongs to the RecA family.

The protein resides in the cytoplasm. In terms of biological role, can catalyze the hydrolysis of ATP in the presence of single-stranded DNA, the ATP-dependent uptake of single-stranded DNA by duplex DNA, and the ATP-dependent hybridization of homologous single-stranded DNAs. It interacts with LexA causing its activation and leading to its autocatalytic cleavage. This Rubrobacter xylanophilus (strain DSM 9941 / JCM 11954 / NBRC 16129 / PRD-1) protein is Protein RecA.